We begin with the raw amino-acid sequence, 145 residues long: Superoxide dismutase [Mn/Fe] (145 aa).

H10 and H64 together coordinate Fe(3+). Positions 10 and 64 each coordinate Mn(2+).

It belongs to the iron/manganese superoxide dismutase family. It depends on Mn(2+) as a cofactor. Fe(3+) is required as a cofactor.

The catalysed reaction is 2 superoxide + 2 H(+) = H2O2 + O2. Destroys superoxide anion radicals which are normally produced within the cells and which are toxic to biological systems. Catalyzes the dismutation of superoxide anion radicals into O2 and H2O2 by successive reduction and oxidation of the transition metal ion at the active site. This Streptococcus salivarius protein is Superoxide dismutase [Mn/Fe] (sodA).